Here is a 141-residue protein sequence, read N- to C-terminus: Large ribosomal subunit protein uL11 (141 aa).

Belongs to the universal ribosomal protein uL11 family. As to quaternary structure, part of the ribosomal stalk of the 50S ribosomal subunit. Interacts with L10 and the large rRNA to form the base of the stalk. L10 forms an elongated spine to which L12 dimers bind in a sequential fashion forming a multimeric L10(L12)X complex. One or more lysine residues are methylated.

Its function is as follows. Forms part of the ribosomal stalk which helps the ribosome interact with GTP-bound translation factors. The chain is Large ribosomal subunit protein uL11 from Prochlorococcus marinus subsp. pastoris (strain CCMP1986 / NIES-2087 / MED4).